Reading from the N-terminus, the 57-residue chain is Large ribosomal subunit protein bL32 (57 aa).

Residues M1–W20 show a composition bias toward basic residues. Residues M1–A22 form a disordered region.

The protein belongs to the bacterial ribosomal protein bL32 family.

This Mycobacterium sp. (strain JLS) protein is Large ribosomal subunit protein bL32.